Reading from the N-terminus, the 156-residue chain is NADH-ubiquinone oxidoreductase 20 kDa subunit (156 aa).

[4Fe-4S] cluster is bound by residues cysteine 33, cysteine 34, cysteine 98, and cysteine 128.

Belongs to the complex I 20 kDa subunit family. Requires [4Fe-4S] cluster as cofactor.

It localises to the mitochondrion. It carries out the reaction a ubiquinone + NADH + 5 H(+)(in) = a ubiquinol + NAD(+) + 4 H(+)(out). This is NADH-ubiquinone oxidoreductase 20 kDa subunit (NAD10) from Paramecium tetraurelia.